Reading from the N-terminus, the 307-residue chain is Membrane protein insertase YidC 2 (307 aa).

Positions 1-23 (MKLTLNRILFSGLALSILFTLTG) are cleaved as a signal peptide. Residue cysteine 24 is the site of N-palmitoyl cysteine attachment. Residue cysteine 24 is the site of S-diacylglycerol cysteine attachment. Helical transmembrane passes span 58–78 (LGYGLAIIIVTIIVRTLILPL), 135–155 (LGGIGCLPLLIQMPFFSAMYF), 179–199 (VLTAIIAALYFFQSWLSMMAV), 209–225 (TMMYTMPIMMIFMSFSL), and 231–251 (LYWLVGGFFSIIQQLITTYLL). The interval 263–307 (YAKTPPKAYQSTSSRKDVTPSQNMEQANLPKKIKSNRNAGKQRKR) is disordered. Over residues 271–288 (YQSTSSRKDVTPSQNMEQ) the composition is skewed to polar residues. The span at 293–307 (KKIKSNRNAGKQRKR) shows a compositional bias: basic residues.

This sequence belongs to the OXA1/ALB3/YidC family. Type 2 subfamily.

It is found in the cell membrane. Required for the insertion and/or proper folding and/or complex formation of integral membrane proteins into the membrane. Involved in integration of membrane proteins that insert both dependently and independently of the Sec translocase complex, as well as at least some lipoproteins. This Streptococcus pyogenes serotype M18 (strain MGAS8232) protein is Membrane protein insertase YidC 2.